Reading from the N-terminus, the 78-residue chain is Antitoxin FitA (78 aa).

Homodimer in the absence of FitB; forms a heterodimer with FitB; 4 FitAB heterodimers form a complex that binds to fitAB promoter DNA. The complex is also seen in solution.

In terms of biological role, antitoxin component of a type II toxin-antitoxin (TA) system. Plays a role in the speed with which bacteria traverse human epithelial cells; disruption of the locus increases the speed of trafficking about 2-4-fold. Binds to its own promoter, binding affinity of the FitAB complex is 20-30-fold higher than FitA alone. No nuclease activity was observed for the FitAB complex, perhaps because FitA (the antitoxin) prevents metal binding and thus catalysis by FitB. In Neisseria gonorrhoeae (strain ATCC 700825 / FA 1090), this protein is Antitoxin FitA (fitA).